Consider the following 643-residue polypeptide: 1-deoxy-D-xylulose-5-phosphate synthase (643 aa).

Thiamine diphosphate is bound by residues His78 and 119–121 (AHS). Position 150 (Asp150) interacts with Mg(2+). Thiamine diphosphate is bound by residues 151 to 152 (GS), Asn179, Tyr288, and Glu370. Asn179 contributes to the Mg(2+) binding site.

Belongs to the transketolase family. DXPS subfamily. Homodimer. It depends on Mg(2+) as a cofactor. Thiamine diphosphate is required as a cofactor.

The catalysed reaction is D-glyceraldehyde 3-phosphate + pyruvate + H(+) = 1-deoxy-D-xylulose 5-phosphate + CO2. It participates in metabolic intermediate biosynthesis; 1-deoxy-D-xylulose 5-phosphate biosynthesis; 1-deoxy-D-xylulose 5-phosphate from D-glyceraldehyde 3-phosphate and pyruvate: step 1/1. Catalyzes the acyloin condensation reaction between C atoms 2 and 3 of pyruvate and glyceraldehyde 3-phosphate to yield 1-deoxy-D-xylulose-5-phosphate (DXP). This Brucella canis (strain ATCC 23365 / NCTC 10854 / RM-666) protein is 1-deoxy-D-xylulose-5-phosphate synthase.